We begin with the raw amino-acid sequence, 72 residues long: Cell division protein ZapB (72 aa).

Residues 1–72 (MSLEILDQLE…RSLLGKIDNV (72 aa)) adopt a coiled-coil conformation. The segment at 33–57 (KNNQSQQANDALRSENEQLKSEHQN) is disordered. Positions 44–57 (LRSENEQLKSEHQN) are enriched in basic and acidic residues.

This sequence belongs to the ZapB family. In terms of assembly, homodimer. The ends of the coiled-coil dimer bind to each other, forming polymers. Interacts with FtsZ.

It is found in the cytoplasm. Functionally, non-essential, abundant cell division factor that is required for proper Z-ring formation. It is recruited early to the divisome by direct interaction with FtsZ, stimulating Z-ring assembly and thereby promoting cell division earlier in the cell cycle. Its recruitment to the Z-ring requires functional FtsA or ZipA. This Pasteurella multocida (strain Pm70) protein is Cell division protein ZapB.